The following is a 1500-amino-acid chain: ABC transporter G family member 42 (1500 aa).

The interval 26 to 56 (VDEAFMPQNSGGGGGSRGRRRSGRGGTADDD) is disordered. The region spanning 182–455 (LGLVGVRPGR…FESCGFRCPE (274 aa)) is the ABC transporter 1 domain. 215 to 222 (GPPSSGKT) is an ATP binding site. The ABC transmembrane type-2 1 domain occupies 533–746 (ELLKASFAKE…GYNALAVNEF (214 aa)). A run of 7 helical transmembrane segments spans residues 551-571 (FVYI…STVF), 584-604 (GFVY…NGFA), 639-659 (IPFS…TIGF), 670-690 (LLLV…TAGL), 695-715 (IIAQ…GGFL), 724-744 (WWIW…LAVN), and 783-803 (FWIG…LFTL). Residues 822–834 (TAKEAEGNGDARH) are compositionally biased toward basic and acidic residues. Residues 822–850 (TAKEAEGNGDARHTVRNGSTKSNGGNHKE) form a disordered region. Residues 837–846 (RNGSTKSNGG) are compositionally biased toward polar residues. The ABC transporter 2 domain maps to 894 to 1151 (MSFDDVNYYV…KMIEYFEAIP (258 aa)). An ATP-binding site is contributed by 939–946 (GVSGAGKT). Residues 1224–1438 (GQFRACLWKQ…TVYGLIVTQY (215 aa)) enclose the ABC transmembrane type-2 2 domain. The next 7 helical transmembrane spans lie at 1245–1265 (LVRF…FWKI), 1277–1297 (MVIG…CATV), 1331–1351 (IPYV…MMSF), 1358–1378 (FFWF…YGMM), 1388–1408 (VAAI…GFFI), 1416–1436 (WWIW…LIVT), and 1472–1492 (VVAP…AICI).

It belongs to the ABC transporter superfamily. ABCG family. PDR (TC 3.A.1.205) subfamily.

The protein resides in the membrane. May be a general defense protein. The sequence is that of ABC transporter G family member 42 from Oryza sativa subsp. japonica (Rice).